The sequence spans 584 residues: FAD-linked oxidoreductase OXR2 (584 aa).

Positions 1-22 (MRSIISAFILSLNFCTQPLVRG) are cleaved as a signal peptide. N75, N97, N115, N225, N302, N321, and N507 each carry an N-linked (GlcNAc...) asparagine glycan. Positions 128 to 310 (LGMLSEKYIA…LNATFKVEPV (183 aa)) constitute an FAD-binding PCMH-type domain.

It belongs to the oxygen-dependent FAD-linked oxidoreductase family. FAD serves as cofactor.

It functions in the pathway secondary metabolite biosynthesis. FAD-linked oxidoreductase; part of the gene cluster that mediates the biosynthesis of a tyrosine-derived cytochalasan acting as a fungal signal recognized by resistant rice plants and leads to avirulence in Pi33 resistant rice cultivars. The first step in the pathway is catalyzed by the hybrid PKS-NRPS ACE1, assisted by the enoyl reductase RAP1, that are responsible for fusion of the tyrosine precursor and the polyketide backbone. The polyketide synthase module (PKS) of ACE1 is responsible for the synthesis of the polyketide backbone and the downstream nonribosomal peptide synthetase (NRPS) amidates the carboxyl end of the polyketide with the tyrosine precursor. Because ACE1 lacks a designated enoylreductase (ER) domain, the required activity is provided the enoyl reductase RAP1. Reduction by the hydrolyase ORFZ, followed by dehydration and intra-molecular Diels-Alder cyclization by the Diels-Alderase ORF3 then yield the required isoindolone-fused macrocycle. A number of oxidative steps catalyzed by the tailoring enzymes identified within the cluster, including cytochrome P450 monooxygenases CYP1 to CYP4, the FAD-linked oxidoreductase OXR2 and the short-chain dehydrogenase/reductase OXR1, are further required to afford the final cytochalasans that confer avirulence and which have still to be identified. The monooxygenase CYP1 has been shown to be a site-selective C-18 hydroxylase whereas the function of CYP3 is the site-selective epoxidation of the C-6/C-7 olefin that is present in some intermediate compounds. Finally, SYN2 and RAP2 are not required for avirulence in Pi33 resistant rice cultivars. This chain is FAD-linked oxidoreductase OXR2, found in Pyricularia oryzae (strain 70-15 / ATCC MYA-4617 / FGSC 8958) (Rice blast fungus).